The following is a 508-amino-acid chain: General transcription factor IIF subunit 1 (508 aa).

A2 carries the N-acetylalanine modification. Phosphothreonine is present on T156. Residues 177 to 448 (MQQRRLKDQD…SSGDVQVTED (272 aa)) form a disordered region. A phosphoserine mark is found at S217, S218, S221, and S224. The segment covering 232-251 (SKAKKKAPVTKAGRKKKKKK) has biased composition (basic residues). 2 stretches are compositionally biased toward acidic residues: residues 255–270 (DEAFEDSDDGDFEGQE) and 303–325 (EQSESSEESEEEKPPEEDKEEEE). A Phosphothreonine modification is found at T331. A compositionally biased stretch (acidic residues) spans 343-355 (DDSDSSEESDIDS). Over residues 364–374 (AKKKTPPKRER) the composition is skewed to basic residues. Phosphoserine is present on residues S377, S380, S381, and S385. Polar residues predominate over residues 378 to 388 (GGSSKGTSRPG). The residue at position 389 (T389) is a Phosphothreonine. The segment covering 389–406 (TPSAEAASTSSTLRAAAS) has biased composition (low complexity). The residue at position 391 (S391) is a Phosphoserine. The residue at position 407 (K407) is an N6-acetyllysine. The segment covering 428–443 (GPQSLSGKSTPSSGDV) has biased composition (polar residues). 3 positions are modified to phosphoserine: S431, S433, and S436. T437 carries the post-translational modification Phosphothreonine. S440 carries the post-translational modification Phosphoserine.

The protein belongs to the TFIIF alpha subunit family. In terms of assembly, heterodimer of an alpha and a beta subunit. Interacts with GTF2F2, CTDP1, TAF6/TAFII80 and URI1. Interacts with GTF2B (via C-terminus and preferentially via acetylated form); this interaction prevents binding of GTF2B to GTF2F2. Part of TBP-based Pol II pre-initiation complex (PIC), in which Pol II core assembles with general transcription factors and other specific initiation factors including GTF2E1, GTF2E2, GTF2F1, GTF2F2, TCEA1, ERCC2, ERCC3, GTF2H2, GTF2H3, GTF2H4, GTF2H5, GTF2A1, GTF2A2, GTF2B and TBP; this large multi-subunit PIC complex mediates DNA unwinding and targets Pol II core to the transcription start site where the first phosphodiester bond forms. In terms of processing, phosphorylated on Ser and other residues by TAF1 and casein kinase II-like kinases.

It is found in the nucleus. In terms of biological role, TFIIF is a general transcription initiation factor that binds to RNA polymerase II and helps to recruit it to the initiation complex in collaboration with TFIIB. It promotes transcription elongation. In Rattus norvegicus (Rat), this protein is General transcription factor IIF subunit 1 (Gtf2f1).